The primary structure comprises 193 residues: uncharacterized protein (193 aa).

Positions 1–144 (MEKKRTLSVN…NNNNNNEGTI (144 aa)) are disordered. Over residues 29–86 (NSLNNIENNECNNNNNNNNNNNNNNSNSNNLNNSNNNNINTSSNSINSSNSINNSIDN) the composition is skewed to low complexity. Polar residues predominate over residues 103 to 118 (KMNSSQEFQSYLTPNK). The span at 119-140 (NNNNRNNNNRNNNNNNNNNNNN) shows a compositional bias: low complexity. The chain crosses the membrane as a helical span at residues 158–180 (YMIRPFLVGASASFGISIGMFYF).

It is found in the membrane. This is an uncharacterized protein from Dictyostelium discoideum (Social amoeba).